The primary structure comprises 187 residues: Structural protein ORF187 (187 aa).

A helical membrane pass occupies residues Ile-65–Ala-85.

It localises to the host membrane. The protein localises to the virion. The protein is Structural protein ORF187 of Acidianus two-tailed virus (ATV).